The primary structure comprises 400 residues: Large envelope protein (400 aa).

An N-acetylmethionine modification is found at methionine 1. Glycine 2 is lipidated: N-myristoyl glycine; by host. Residues 2–119 are pre-S1; the sequence is GGWSSKHRKG…PPLRDTHPQA (118 aa). The interval 2 to 174 is pre-S; sequence GGWSSKHRKG…FTKTGDPASN (173 aa). Residues 2 to 181 are Virion surface; in external conformation-facing; that stretch reads GGWSSKHRKG…ASNMESTTSG (180 aa). Residues 2–253 are Intravirion; in internal conformation-facing; the sequence is GGWSSKHRKG…PGYRWMCLRR (252 aa). Tryptophan 4 carries N-linked (GlcNAc...) asparagine glycosylation. Residues 89-117 form a disordered region; that stretch reads PAAPPPASTNRQSGRQPTPISPPLRDTHP. The span at 96 to 106 shows a compositional bias: polar residues; it reads STNRQSGRQPT. Residues 120-174 are pre-S2; it reads MQWNSTAFHQALQDPRVRGLYFPAGGSSSGTVNPVPNTVSHISSIFTKTGDPASN. A helical transmembrane segment spans residues 182–202; the sequence is FLGPLLVLQAGFFLLTRILTI. Topologically, residues 203-253 are intravirion; in external conformation; sequence PQSLDSWWTSLNFLGGAPGCIGQNSQSQTSNHSPTSCPPTCPGYRWMCLRR. Residues 254–274 form a helical membrane-spanning segment; sequence FIIFLFILLLCLIFLLVLLDY. At 275–348 the chain is on the virion surface side; it reads QGMLPVCPLL…WASVRFSWLS (74 aa). An N-linked (GlcNAc...) asparagine; by host glycan is attached at asparagine 320. Residues 349–369 traverse the membrane as a helical segment; that stretch reads LLVPFVQWFAGLSPTVWLSVI. Topologically, residues 370-375 are intravirion; sequence WMIWYW. A helical transmembrane segment spans residues 376 to 398; it reads GPSLYNILSPFLPLLPIFLCLWV. At 399-400 the chain is on the virion surface side; it reads YI.

This sequence belongs to the orthohepadnavirus major surface antigen family. In terms of assembly, in its internal form (Li-HBsAg), interacts with the capsid protein and with the isoform S. Interacts with host chaperone CANX. Associates with host chaperone CANX through its pre-S2 N glycan; this association may be essential for isoform M proper secretion. As to quaternary structure, interacts with isoform L. Interacts with the antigens of satellite virus HDV (HDVAgs); this interaction is required for encapsidation of HDV genomic RNA. Post-translationally, isoform M is N-terminally acetylated by host at a ratio of 90%, and N-glycosylated by host at the pre-S2 region. In terms of processing, myristoylated.

Its subcellular location is the virion membrane. The large envelope protein exists in two topological conformations, one which is termed 'external' or Le-HBsAg and the other 'internal' or Li-HBsAg. In its external conformation the protein attaches the virus to cell receptors and thereby initiating infection. This interaction determines the species specificity and liver tropism. This attachment induces virion internalization predominantly through caveolin-mediated endocytosis. The large envelope protein also assures fusion between virion membrane and endosomal membrane. In its internal conformation the protein plays a role in virion morphogenesis and mediates the contact with the nucleocapsid like a matrix protein. Functionally, the middle envelope protein plays an important role in the budding of the virion. It is involved in the induction of budding in a nucleocapsid independent way. In this process the majority of envelope proteins bud to form subviral lipoprotein particles of 22 nm of diameter that do not contain a nucleocapsid. This is Large envelope protein from Homo sapiens (Human).